A 449-amino-acid polypeptide reads, in one-letter code: Phosphoglucosamine mutase (449 aa).

The active-site Phosphoserine intermediate is the Ser100. Mg(2+)-binding residues include Ser100, Asp241, Asp243, and Asp245. Position 100 is a phosphoserine (Ser100).

This sequence belongs to the phosphohexose mutase family. Requires Mg(2+) as cofactor. In terms of processing, activated by phosphorylation.

It catalyses the reaction alpha-D-glucosamine 1-phosphate = D-glucosamine 6-phosphate. Functionally, catalyzes the conversion of glucosamine-6-phosphate to glucosamine-1-phosphate. The polypeptide is Phosphoglucosamine mutase (Clostridium botulinum (strain Kyoto / Type A2)).